Consider the following 159-residue polypeptide: Nucleotide-binding protein PSPTO_4393 (159 aa).

The protein belongs to the YajQ family.

Its function is as follows. Nucleotide-binding protein. This chain is Nucleotide-binding protein PSPTO_4393, found in Pseudomonas syringae pv. tomato (strain ATCC BAA-871 / DC3000).